A 1155-amino-acid polypeptide reads, in one-letter code: Eukaryotic translation initiation factor 3 subunit A (1155 aa).

One can recognise a PCI domain in the interval 319-502 (LQRMAAHVLL…NSIYFGTDLT (184 aa)). Disordered regions lie at residues 589-613 (QNNA…LAEQ) and 836-1155 (AAEA…VKRR). Basic and acidic residues-rich tracts occupy residues 836 to 900 (AAEA…RGGD), 925 to 987 (DRNE…EPDS), 1004 to 1057 (SRDD…DAAP), and 1066 to 1101 (DAPR…RAPK). Gly residues predominate over residues 1104–1118 (GPSGGTGTAASGGGN). The span at 1125 to 1145 (PRDEPAPKRDQPQDKENKAVD) shows a compositional bias: basic and acidic residues.

It belongs to the eIF-3 subunit A family. Component of the eukaryotic translation initiation factor 3 (eIF-3) complex. The eIF-3 complex interacts with pix.

The protein resides in the cytoplasm. RNA-binding component of the eukaryotic translation initiation factor 3 (eIF-3) complex, which is involved in protein synthesis of a specialized repertoire of mRNAs and, together with other initiation factors, stimulates binding of mRNA and methionyl-tRNAi to the 40S ribosome. The eIF-3 complex specifically targets and initiates translation of a subset of mRNAs involved in cell proliferation. This is Eukaryotic translation initiation factor 3 subunit A from Drosophila pseudoobscura pseudoobscura (Fruit fly).